The chain runs to 467 residues: Zinc finger and BTB domain-containing protein 43 (467 aa).

M1 is modified (N-acetylmethionine). The region spanning 33–97 (CDVSIVVQGH…SYTGRLVMPA (65 aa)) is the BTB domain. 2 disordered regions span residues 134–153 (LNHG…GLVE) and 162–227 (HTDF…EFHY). Positions 140 to 149 (HQSPSSSNYN) are enriched in polar residues. 2 stretches are compositionally biased toward basic and acidic residues: residues 164–174 (DFPKAQELRDG) and 182–194 (KDEL…EHEY). Residues K182, K247, K297, and K358 each participate in a glycyl lysine isopeptide (Lys-Gly) (interchain with G-Cter in SUMO2) cross-link. Residues 373–394 (YPCQCGKSFTHKSQRDRHMSMH) form a C2H2-type 1; atypical zinc finger. The segment at 400–422 (YGCSVCGKKFKMKHHLVGHMKIH) adopts a C2H2-type 2 zinc-finger fold. Phosphothreonine is present on T423. A C2H2-type 3; atypical zinc finger spans residues 428-450 (YECNICAKRFMWRDSFHRHVTSC). K458 participates in a covalent cross-link: Glycyl lysine isopeptide (Lys-Gly) (interchain with G-Cter in SUMO2).

This sequence belongs to the krueppel C2H2-type zinc-finger protein family. As to quaternary structure, interacts with BDP1.

The protein resides in the nucleus. Its function is as follows. May be involved in transcriptional regulation. This chain is Zinc finger and BTB domain-containing protein 43 (Zbtb43), found in Mus musculus (Mouse).